We begin with the raw amino-acid sequence, 252 residues long: Imidazole glycerol phosphate synthase subunit HisF (252 aa).

Residues Asp-13 and Asp-132 contribute to the active site.

The protein belongs to the HisA/HisF family. In terms of assembly, heterodimer of HisH and HisF.

The protein localises to the cytoplasm. The catalysed reaction is 5-[(5-phospho-1-deoxy-D-ribulos-1-ylimino)methylamino]-1-(5-phospho-beta-D-ribosyl)imidazole-4-carboxamide + L-glutamine = D-erythro-1-(imidazol-4-yl)glycerol 3-phosphate + 5-amino-1-(5-phospho-beta-D-ribosyl)imidazole-4-carboxamide + L-glutamate + H(+). It functions in the pathway amino-acid biosynthesis; L-histidine biosynthesis; L-histidine from 5-phospho-alpha-D-ribose 1-diphosphate: step 5/9. Functionally, IGPS catalyzes the conversion of PRFAR and glutamine to IGP, AICAR and glutamate. The HisF subunit catalyzes the cyclization activity that produces IGP and AICAR from PRFAR using the ammonia provided by the HisH subunit. In Campylobacter curvus (strain 525.92), this protein is Imidazole glycerol phosphate synthase subunit HisF.